The chain runs to 50 residues: Large ribosomal subunit protein bL33 (50 aa).

It belongs to the bacterial ribosomal protein bL33 family.

This Citrifermentans bemidjiense (strain ATCC BAA-1014 / DSM 16622 / JCM 12645 / Bem) (Geobacter bemidjiensis) protein is Large ribosomal subunit protein bL33.